We begin with the raw amino-acid sequence, 395 residues long: S-adenosylmethionine synthase (395 aa).

Position 15 (H15) interacts with ATP. Mg(2+) is bound at residue D17. E43 lines the K(+) pocket. Residues E56 and Q99 each coordinate L-methionine. Residues 99–109 (QSPDIAMGVDE) form a flexible loop region. Residues 173-175 (DGK), 239-240 (RF), D248, 254-255 (RK), A271, and K275 each bind ATP. Position 248 (D248) interacts with L-methionine. Residue K279 coordinates L-methionine.

Belongs to the AdoMet synthase family. As to quaternary structure, homotetramer; dimer of dimers. Requires Mg(2+) as cofactor. K(+) is required as a cofactor.

Its subcellular location is the cytoplasm. The enzyme catalyses L-methionine + ATP + H2O = S-adenosyl-L-methionine + phosphate + diphosphate. It functions in the pathway amino-acid biosynthesis; S-adenosyl-L-methionine biosynthesis; S-adenosyl-L-methionine from L-methionine: step 1/1. Functionally, catalyzes the formation of S-adenosylmethionine (AdoMet) from methionine and ATP. The overall synthetic reaction is composed of two sequential steps, AdoMet formation and the subsequent tripolyphosphate hydrolysis which occurs prior to release of AdoMet from the enzyme. In Desulforudis audaxviator (strain MP104C), this protein is S-adenosylmethionine synthase.